A 415-amino-acid chain; its full sequence is Squalene synthase 12 (415 aa).

Transmembrane regions (helical) follow at residues 281–301 (AIFRFCAIPQIMAIGTLALCF) and 391–411 (LIAIIFIILAILYAYLSSNLL).

The protein belongs to the phytoene/squalene synthase family. It depends on Mg(2+) as a cofactor. Mn(2+) is required as a cofactor.

It localises to the endoplasmic reticulum membrane. It carries out the reaction 2 (2E,6E)-farnesyl diphosphate + NADH + H(+) = squalene + 2 diphosphate + NAD(+). It catalyses the reaction 2 (2E,6E)-farnesyl diphosphate + NADPH + H(+) = squalene + 2 diphosphate + NADP(+). Its pathway is terpene metabolism; lanosterol biosynthesis; lanosterol from farnesyl diphosphate: step 1/3. Component of the triterpene saponins (e.g. ginsenosides or panaxosides) and phytosterols biosynthetic pathways. Catalyzes the biosynthesis of squalene. The sequence is that of Squalene synthase 12 from Panax ginseng (Korean ginseng).